A 619-amino-acid polypeptide reads, in one-letter code: Zinc finger protein 668 (619 aa).

At Met1 the chain carries N-acetylmethionine. Ser10 bears the Phosphoserine mark. The C2H2-type 1 zinc finger occupies 22–44 (YKCLFCTKTFPNAPRAARHAATH). The disordered stretch occupies residues 36–74 (RAARHAATHTPTDCTEEVREAQPKVDTEPKAEEASGDKV). The span at 51-71 (EEVREAQPKVDTEPKAEEASG) shows a compositional bias: basic and acidic residues. Glycyl lysine isopeptide (Lys-Gly) (interchain with G-Cter in SUMO2) cross-links involve residues Lys59, Lys65, and Lys80. 11 C2H2-type zinc fingers span residues 84–106 (YACP…GRSH), 112–134 (FPCP…LASH), 140–162 (FRCT…QRGH), 168–190 (YACP…RRTH), 196–218 (YSCE…ERSH), 224–246 (FLCS…QRIH), 252–274 (YRCP…ERTH), 280–302 (FLCP…QRAH), 308–330 (YRCE…RRVH), 336–358 (FKCL…ALVH), and 364–386 (FRCE…SRMH). Residue Lys154 forms a Glycyl lysine isopeptide (Lys-Gly) (interchain with G-Cter in SUMO2) linkage. Ser387 carries the phosphoserine modification. The C2H2-type 13 zinc-finger motif lies at 392–414 (FHCNACGKSFVVLSSLRKHERTH). The disordered stretch occupies residues 491–513 (VGEAPSTLGDAGEVGGEETDEKP). A Glycyl lysine isopeptide (Lys-Gly) (interchain with G-Cter in SUMO2) cross-link involves residue Lys512. C2H2-type zinc fingers lie at residues 516 to 538 (FVCR…ERSH), 544 to 566 (FPCT…SRTH), and 572 to 594 (YSCS…ERTH).

It belongs to the krueppel C2H2-type zinc-finger protein family.

The protein localises to the nucleus. In terms of biological role, may be involved in transcriptional regulation. May play a role in DNA repair process. The chain is Zinc finger protein 668 (Znf668) from Mus musculus (Mouse).